The primary structure comprises 83 residues: MTADDSDEPTADEIVEVASDAAEGLILSRYKQSEVTDMDVTVRFEDGTLDVDIYLNAPDDPDPGAVAQEAVEAAESAVDELFE.

The protein belongs to the UPF0440 family.

This is an uncharacterized protein from Natronomonas pharaonis (strain ATCC 35678 / DSM 2160 / CIP 103997 / JCM 8858 / NBRC 14720 / NCIMB 2260 / Gabara) (Halobacterium pharaonis).